We begin with the raw amino-acid sequence, 353 residues long: MSKGIVALAMSGGVDSSVSAYILKERGYEVIGIYMDLWRDEREEYCNKSAAEDARRVAEKLDIPFHIINIGKEFKANVIDYFIDEYLSGRTPNPCVACNKTIKFEAFFNAAKEFGADFMATGHYCKIEERNRRKVIVKAEDDKKDQTYMMYNLKQYQLERTIMPCGEYRKEHIREIAENIGLDVYNKKDSQEICFIPDNDHGGFIKRNYKSKVSEGNFVDKAGKIIGKHKGIIYYTIGQRKGLGIALGKPAYVIDINPITNEVVIGDEEDIFHTELIAKDVNFIPFDKLEKSMELEAKVRYSAKPSKATIIPLGNNKVKVVFQNKQRAITKGQSVVLYDKDMLVGGGIIEEIV.

Residues 9 to 16 and M35 contribute to the ATP site; that span reads AMSGGVDS. C98 (nucleophile) is an active-site residue. Residues C98 and C194 are joined by a disulfide bond. Residue G122 participates in ATP binding. The interval 144–146 is interaction with tRNA; it reads KDQ. C194 functions as the Cysteine persulfide intermediate in the catalytic mechanism. The interaction with tRNA stretch occupies residues 300 to 301; it reads RY.

It belongs to the MnmA/TRMU family.

It localises to the cytoplasm. It catalyses the reaction S-sulfanyl-L-cysteinyl-[protein] + uridine(34) in tRNA + AH2 + ATP = 2-thiouridine(34) in tRNA + L-cysteinyl-[protein] + A + AMP + diphosphate + H(+). Functionally, catalyzes the 2-thiolation of uridine at the wobble position (U34) of tRNA, leading to the formation of s(2)U34. This Clostridium botulinum (strain Loch Maree / Type A3) protein is tRNA-specific 2-thiouridylase MnmA 2.